The sequence spans 473 residues: Inactive pancreatic lipase-related protein 1 (473 aa).

The signal sequence occupies residues 1–17; that stretch reads MLILWTIPLFLLGAAQG. 2 disulfide bridges follow: cysteine 21–cysteine 27 and cysteine 109–cysteine 120. Serine 171 functions as the Nucleophile in the catalytic mechanism. The active-site Charge relay system is the aspartate 194. Ca(2+) contacts are provided by glutamate 205, arginine 208, aspartate 210, and aspartate 213. The cysteines at positions 255 and 279 are disulfide-linked. The Charge relay system role is filled by histidine 281. 3 disulfides stabilise this stretch: cysteine 303-cysteine 314, cysteine 317-cysteine 322, and cysteine 451-cysteine 467. The region spanning 356 to 467 is the PLAT domain; that stretch reads WRYRVSLTFS…EDILLTLLPC (112 aa).

This sequence belongs to the AB hydrolase superfamily. Lipase family. As to expression, expressed in female, but not in male, lacrimal gland. Expressed in male and female sublingual gland and pancreas.

It localises to the secreted. Its function is as follows. May function as inhibitor of dietary triglyceride digestion. Lacks detectable lipase activity (in vitro). This chain is Inactive pancreatic lipase-related protein 1 (Pnliprp1), found in Mus musculus (Mouse).